A 727-amino-acid polypeptide reads, in one-letter code: Iron-sulfur clusters transporter ATM1, mitochondrial (727 aa).

A mitochondrion-targeting transit peptide spans 1–25; sequence MLIGGAQNRLYQLRTSNILGLLRTR. Residues 26 to 138 lie on the Mitochondrial matrix side of the membrane; sequence SALRVGSKVE…PRGNTKVKVR (113 aa). Residues 87–107 form a disordered region; the sequence is KSKLPNEDTAHNASEKNSKKT. Residues 90–107 are compositionally biased toward basic and acidic residues; the sequence is LPNEDTAHNASEKNSKKT. A helical membrane pass occupies residues 139–160; the sequence is VLLALALLIGAKVLNVQVPFFF. An ABC transmembrane type-1 domain is found at 139–429; the sequence is VLLALALLIG…LGSVYRELKQ (291 aa). Residues 161 to 183 are Mitochondrial intermembrane-facing; the sequence is KQIIDGMNVDWSDATVALPAALG. Residues 184–207 form a helical membrane-spanning segment; it reads LTIMCYGLARFGAVLFGELRNAIF. Residues 208-256 lie on the Mitochondrial matrix side of the membrane; sequence ARVAQNAIRNVSLQTFEHLMKLDLGWHLSRQTGGLTRAMDRGTKGISYV. Residues 257–280 form a helical membrane-spanning segment; that stretch reads LSAMVFHIIPITFEISVVCGILTY. A topological domain (mitochondrial intermembrane) is located at residue glutamine 281. The chain crosses the membrane as a helical span at residues 282-302; the sequence is FGASFAGITFTTMLLYSIFTI. Residues 303 to 368 lie on the Mitochondrial matrix side of the membrane; the sequence is RTTAWRTRFR…SQVKVAQSLA (66 aa). Residues 308–312 and 371–374 contribute to the glutathione site; these read RTRFR and NSGQ. The chain crosses the membrane as a helical span at residues 369–387; the sequence is FLNSGQSLIFTTALTGMMY. Topologically, residues 388–402 are mitochondrial intermembrane; it reads MGCTGVIGGDLTVGD. Residues 403-424 form a helical membrane-spanning segment; sequence LVLINQLVFQLSVPLNFLGSVY. Glycine 421 contributes to the glutathione binding site. Residues 425-727 lie on the Mitochondrial matrix side of the membrane; the sequence is RELKQSLIDM…ETLEKLNKSI (303 aa). Residues 465–701 enclose the ABC transporter domain; it reads IKFENVTFGY…ENSLYKELWR (237 aa). Residues tyrosine 474 and 498–509 each bind ATP; that span reads GPSGSGKSTVLK.

It belongs to the ABC transporter superfamily. ABCB family. Heavy Metal importer (TC 3.A.1.210) subfamily. In terms of assembly, homodimer.

Its subcellular location is the mitochondrion inner membrane. Functionally, performs an essential function in the generation of cytoplasmic iron-sulfur proteins by mediating the ATP-dependent export of Fe/S cluster precursors synthesized by NFS1 and other mitochondrial proteins. Hydrolyzes ATP. Binds glutathione and may function by transporting a glutathione-conjugated iron-sulfur compound. This is Iron-sulfur clusters transporter ATM1, mitochondrial from Candida glabrata (strain ATCC 2001 / BCRC 20586 / JCM 3761 / NBRC 0622 / NRRL Y-65 / CBS 138) (Yeast).